The primary structure comprises 366 residues: tRNA/tmRNA (uracil-C(5))-methyltransferase (366 aa).

The S-adenosyl-L-methionine site is built by glutamine 187, tyrosine 215, asparagine 220, glutamate 236, and aspartate 297. Cysteine 322 acts as the Nucleophile in catalysis. The active-site Proton acceptor is glutamate 356.

The protein belongs to the class I-like SAM-binding methyltransferase superfamily. RNA M5U methyltransferase family. TrmA subfamily.

The enzyme catalyses uridine(54) in tRNA + S-adenosyl-L-methionine = 5-methyluridine(54) in tRNA + S-adenosyl-L-homocysteine + H(+). It carries out the reaction uridine(341) in tmRNA + S-adenosyl-L-methionine = 5-methyluridine(341) in tmRNA + S-adenosyl-L-homocysteine + H(+). Dual-specificity methyltransferase that catalyzes the formation of 5-methyluridine at position 54 (m5U54) in all tRNAs, and that of position 341 (m5U341) in tmRNA (transfer-mRNA). This chain is tRNA/tmRNA (uracil-C(5))-methyltransferase, found in Marinomonas sp. (strain MWYL1).